The chain runs to 483 residues: FK506-binding protein 4 (483 aa).

2 disordered regions span residues 41–171 and 208–371; these read TAEP…EEFV and TGNY…LKKP. Positions 68–93 are enriched in acidic residues; it reads EEDDDEYLDIDGEDSEDDEESDDEEV. Composition is skewed to basic and acidic residues over residues 108–121 and 130–150; these read REAAIKKLLEATKE and ADAKPNGKGKKDSKGKAKASE. Composition is skewed to acidic residues over residues 151-167, 216-233, and 241-256; these read SDDEKSDEDDEEGEPNF, GQDEEDDEDEEDYSDEEY, and LESDSDYESDELDEID. Composition is skewed to basic and acidic residues over residues 298-309, 323-344, and 351-370; these read LVAKDKKQAEKQ, ENKDVKKEGKSDKKVQFAKDLE, and AKDKLEKKEEKKDDKADLKK. Positions 397–483 constitute a PPIase FKBP-type domain; it reads GDRVSLRYIG…VFDIKLLEIK (87 aa).

Belongs to the FKBP-type PPIase family. FKBP3/4 subfamily. In terms of assembly, binds to histones H3 and H4.

Its subcellular location is the nucleus. It catalyses the reaction [protein]-peptidylproline (omega=180) = [protein]-peptidylproline (omega=0). In terms of biological role, PPIase that acts as a histone chaperone. Histone proline isomerase that increases the rate of cis-trans isomerization at prolines on the histone H3 N-terminal tail. Proline isomerization influences H3 methylation thereby regulating gene expression. The chain is FK506-binding protein 4 (FPR4) from Chaetomium thermophilum (strain DSM 1495 / CBS 144.50 / IMI 039719) (Thermochaetoides thermophila).